Consider the following 74-residue polypeptide: uncharacterized protein (74 aa).

This is an uncharacterized protein from Treponema pallidum (strain Nichols).